The sequence spans 198 residues: Altered inheritance of mitochondria protein 34, mitochondrial (198 aa).

The transit peptide at M1–S55 directs the protein to the mitochondrion. The SAP domain maps to F69 to D103. Residues I172–L187 traverse the membrane as a helical segment.

It belongs to the AIM34 family.

Its subcellular location is the mitochondrion membrane. This Saccharomyces cerevisiae (strain YJM789) (Baker's yeast) protein is Altered inheritance of mitochondria protein 34, mitochondrial (AIM34).